The primary structure comprises 294 residues: uncharacterized protein (294 aa).

A disordered region spans residues 1–32 (MSHLKDPTTQYYTGEYPKQKQPTPGIQAKMTP). Lys-39 is modified (N6-acetyllysine). 53–77 (LVTGGDSGIGRAAAIAYAREGADVA) provides a ligand contact to NADP(+). Position 186 (Ser-186) interacts with substrate. The active-site Proton acceptor is Tyr-199.

This sequence belongs to the short-chain dehydrogenases/reductases (SDR) family.

This is an uncharacterized protein from Escherichia coli (strain K12).